A 394-amino-acid polypeptide reads, in one-letter code: Actin-related protein 2 (394 aa).

An N-acetylmethionine modification is found at Met1. ATP-binding positions include 160–162 and 214–218; these read GDG and RMIKE. An N6-acetyllysine modification is found at Lys299. 305–310 contacts ATP; sequence GGSTMY. Lys322 bears the N6-acetyllysine mark.

It belongs to the actin family. ARP2 subfamily. In terms of assembly, component of the Arp2/3 complex composed of ACTR2/ARP2, ACTR3/ARP3, ARPC1B/p41-ARC, ARPC2/p34-ARC, ARPC3/p21-ARC, ARPC4/p20-ARC and ARPC5/p16-ARC. Interacts with AVIL.

Its subcellular location is the cytoplasm. It localises to the cytoskeleton. The protein localises to the cell projection. The protein resides in the nucleus. Its function is as follows. ATP-binding component of the Arp2/3 complex, a multiprotein complex that mediates actin polymerization upon stimulation by nucleation-promoting factor (NPF). The Arp2/3 complex mediates the formation of branched actin networks in the cytoplasm, providing the force for cell motility. Seems to contact the pointed end of the daughter actin filament. In podocytes, required for the formation of lamellipodia downstream of AVIL and PLCE1 regulation. In addition to its role in the cytoplasmic cytoskeleton, the Arp2/3 complex also promotes actin polymerization in the nucleus, thereby regulating gene transcription and repair of damaged DNA. The Arp2/3 complex promotes homologous recombination (HR) repair in response to DNA damage by promoting nuclear actin polymerization, leading to drive motility of double-strand breaks (DSBs). The chain is Actin-related protein 2 (ACTR2) from Bos taurus (Bovine).